The sequence spans 93 residues: Aspartyl/glutamyl-tRNA(Asn/Gln) amidotransferase subunit C (93 aa).

This sequence belongs to the GatC family. In terms of assembly, heterotrimer of A, B and C subunits.

It catalyses the reaction L-glutamyl-tRNA(Gln) + L-glutamine + ATP + H2O = L-glutaminyl-tRNA(Gln) + L-glutamate + ADP + phosphate + H(+). The catalysed reaction is L-aspartyl-tRNA(Asn) + L-glutamine + ATP + H2O = L-asparaginyl-tRNA(Asn) + L-glutamate + ADP + phosphate + 2 H(+). Functionally, allows the formation of correctly charged Asn-tRNA(Asn) or Gln-tRNA(Gln) through the transamidation of misacylated Asp-tRNA(Asn) or Glu-tRNA(Gln) in organisms which lack either or both of asparaginyl-tRNA or glutaminyl-tRNA synthetases. The reaction takes place in the presence of glutamine and ATP through an activated phospho-Asp-tRNA(Asn) or phospho-Glu-tRNA(Gln). This Nautilia profundicola (strain ATCC BAA-1463 / DSM 18972 / AmH) protein is Aspartyl/glutamyl-tRNA(Asn/Gln) amidotransferase subunit C.